Here is a 715-residue protein sequence, read N- to C-terminus: Probable serine/threonine-protein kinase MARK-B (715 aa).

Residues 24–37 (SCSSNSTTSSSSNS) are compositionally biased toward low complexity. A disordered region spans residues 24-65 (SCSSNSTTSSSSNSPKQNKVSPGYRNKPQQQQHKKGHKMGNY). A Protein kinase domain is found at 65 to 320 (YLLGKTIGSG…LDEIKTHVWV (256 aa)). ATP-binding positions include 71-79 (IGSGTSSKV) and Lys-94. Asp-187 acts as the Proton acceptor in catalysis. Basic and acidic residues predominate over residues 335 to 344 (KVSDRLEKEQ). 2 disordered regions span residues 335–399 (KVSD…IPQN) and 446–530 (CSAP…HHST). A compositionally biased stretch (low complexity) spans 345–368 (QQQTPQHQQTQQQLQPQSQLQQHS). Positions 381-399 (IGSNRPLNQSSPNLTIPQN) are enriched in polar residues. Composition is skewed to low complexity over residues 451 to 478 (SPHS…LSVS) and 487 to 513 (SSNP…INTS). Residues 517 to 527 (QYHHHHHHQNH) are compositionally biased toward basic residues. Residues 666–715 (LCPRNETINFEIEVCKVNGMDMYGIKFKRLSGDAWSYSSSCIKIVESLKL) enclose the KA1 domain.

Belongs to the protein kinase superfamily. CAMK Ser/Thr protein kinase family. SNF1 subfamily.

The enzyme catalyses L-seryl-[protein] + ATP = O-phospho-L-seryl-[protein] + ADP + H(+). It carries out the reaction L-threonyl-[protein] + ATP = O-phospho-L-threonyl-[protein] + ADP + H(+). This is Probable serine/threonine-protein kinase MARK-B (mrkB) from Dictyostelium discoideum (Social amoeba).